The primary structure comprises 279 residues: Oxygen-dependent coproporphyrinogen-III oxidase (279 aa).

Ser102 is a binding site for substrate. Positions 106 and 116 each coordinate a divalent metal cation. The active-site Proton donor is the His116. Asn118 to Arg120 serves as a coordination point for substrate. A divalent metal cation is bound by residues His149 and His179. The tract at residues Tyr244 to Asn279 is important for dimerization.

The protein belongs to the aerobic coproporphyrinogen-III oxidase family. In terms of assembly, homodimer. Requires a divalent metal cation as cofactor.

The protein localises to the cytoplasm. It catalyses the reaction coproporphyrinogen III + O2 + 2 H(+) = protoporphyrinogen IX + 2 CO2 + 2 H2O. It functions in the pathway porphyrin-containing compound metabolism; protoporphyrin-IX biosynthesis; protoporphyrinogen-IX from coproporphyrinogen-III (O2 route): step 1/1. Functionally, involved in the heme biosynthesis. Catalyzes the aerobic oxidative decarboxylation of propionate groups of rings A and B of coproporphyrinogen-III to yield the vinyl groups in protoporphyrinogen-IX. The polypeptide is Oxygen-dependent coproporphyrinogen-III oxidase (Rickettsia africae (strain ESF-5)).